Consider the following 255-residue polypeptide: TIR domain-containing protein (255 aa).

Residues 9–185 (LSDQVFINFR…DIVKEVKKQL (177 aa)) form the TIR domain. Glu-83 is an active-site residue. Transmembrane regions (helical) follow at residues 195 to 215 (AIGV…FIAP) and 223 to 243 (FFQT…SWFW). The KASH domain occupies 201 to 255 (LAITINLIFSFFIAPKYLPDQKFFQTPEWFIGTLAVVLASWFWYKNNQNKAPPPS).

As to quaternary structure, forms homomers. Interacts with SUN1, SUN2, SUN3, SUN4 and SUN5.

It is found in the nucleus membrane. It carries out the reaction NAD(+) + H2O = ADP-D-ribose + nicotinamide + H(+). Functionally, could play a role in nuclear morphology, specifically nuclear size. The chain is TIR domain-containing protein from Arabidopsis thaliana (Mouse-ear cress).